The primary structure comprises 377 residues: Prostaglandin reductase-3 (377 aa).

N6-acetyllysine is present on K35. T185, S205, K209, Y224, S247, I269, and Y275 together coordinate NADP(+). Phosphoserine is present on S299. NADP(+)-binding positions include F303–L305 and N361.

This sequence belongs to the zinc-containing alcohol dehydrogenase family. Quinone oxidoreductase subfamily.

It is found in the peroxisome. The enzyme catalyses 13,14-dihydro-15-oxo-prostaglandin E2 + NADP(+) = 15-oxoprostaglandin E2 + NADPH + H(+). The catalysed reaction is 13,14-dihydro-15-oxo-prostaglandin E1 + NADP(+) = 15-oxoprostaglandin E1 + NADPH + H(+). It catalyses the reaction 13,14-dihydro-15-oxo-PGF2alpha + NADP(+) = 15-oxoprostaglandin F2alpha + NADPH + H(+). It carries out the reaction 13,14-dihydro-15-oxo-prostaglandin F1alpha + NADP(+) = 15-oxoprostaglandin F1alpha + NADPH + H(+). In terms of biological role, functions as 15-oxo-prostaglandin 13-reductase and acts on 15-keto-PGE1, 15-keto-PGE2, 15-keto-PGE1-alpha and 15-keto-PGE2-alpha with highest efficiency towards 15-keto-PGE2-alpha. Overexpression represses transcriptional activity of PPARG and inhibits adipocyte differentiation. This is Prostaglandin reductase-3 (PTGR3) from Bos taurus (Bovine).